The following is a 527-amino-acid chain: EGF domain-specific O-linked N-acetylglucosamine transferase (527 aa).

An N-terminal signal peptide occupies residues 1 to 17; it reads MLKLLVLGVLLHDVSLS. A Required for optimal activity motif is present at residues 295–297; that stretch reads DYD. N-linked (GlcNAc...) asparagine glycosylation is present at Asn354. A Prevents secretion from ER motif is present at residues 524-527; sequence RDEL.

The protein belongs to the glycosyltransferase 61 family.

Its subcellular location is the endoplasmic reticulum lumen. The enzyme catalyses L-seryl-[protein] + UDP-N-acetyl-alpha-D-glucosamine = 3-O-(N-acetyl-beta-D-glucosaminyl)-L-seryl-[protein] + UDP + H(+). It catalyses the reaction L-threonyl-[protein] + UDP-N-acetyl-alpha-D-glucosamine = 3-O-(N-acetyl-beta-D-glucosaminyl)-L-threonyl-[protein] + UDP + H(+). Catalyzes the transfer of a single N-acetylglucosamine from UDP-GlcNAc to a serine or threonine residue in extracellular proteins resulting in their modification with a beta-linked N-acetylglucosamine (O-GlcNAc). Specifically glycosylates the Thr residue located between the fifth and sixth conserved cysteines of folded EGF-like domains. The chain is EGF domain-specific O-linked N-acetylglucosamine transferase (EOGT) from Canis lupus familiaris (Dog).